Reading from the N-terminus, the 912-residue chain is Microtubule-associated protein 10 (912 aa).

Disordered stretches follow at residues 31–50 (VAEE…RPSR), 209–239 (KSVE…ADKP), 254–296 (GRAF…QEGT), 335–366 (ASEE…SATG), 443–469 (SPES…NEKS), and 730–859 (RACD…VSSY). The span at 211–229 (VEVSPQTWQENQQLQQPDS) shows a compositional bias: polar residues. Basic and acidic residues predominate over residues 254–263 (GRAFHSKADS). Residues 266–295 (TDSMENGKTNSDMCSKGSSERSVSPPNQEG) show a composition bias toward polar residues. Positions 347–362 (ENVNPPTHTNPPEHTN) are enriched in low complexity. Residues 452 to 468 (CKSESKKDKLSVGENEK) show a composition bias toward basic and acidic residues. Over residues 735–768 (SPGTENPKNSQHTSTSSETRLSIRKNSSAKSSIL) the composition is skewed to polar residues. A compositionally biased stretch (low complexity) spans 796–807 (EASSSDFSSSQW). Polar residues predominate over residues 841 to 859 (GCKSSEKSQSPRTSQVSSY).

In terms of assembly, interacts (via middle region) with microtubules.

The protein localises to the cytoplasm. It localises to the cytoskeleton. Its subcellular location is the spindle pole. The protein resides in the microtubule organizing center. It is found in the centrosome. The protein localises to the midbody. Microtubule-associated protein (MAP) that plays a role in the regulation of cell division; promotes microtubule stability and participates in the organization of the spindle midzone and normal progress of cytokinesis. This is Microtubule-associated protein 10 (MAP10) from Bos taurus (Bovine).